The sequence spans 188 residues: GTP cyclohydrolase 1 (188 aa).

The Zn(2+) site is built by cysteine 78, histidine 81, and cysteine 150.

This sequence belongs to the GTP cyclohydrolase I family. Toroid-shaped homodecamer, composed of two pentamers of five dimers.

The enzyme catalyses GTP + H2O = 7,8-dihydroneopterin 3'-triphosphate + formate + H(+). It participates in cofactor biosynthesis; 7,8-dihydroneopterin triphosphate biosynthesis; 7,8-dihydroneopterin triphosphate from GTP: step 1/1. In Geobacillus kaustophilus (strain HTA426), this protein is GTP cyclohydrolase 1.